A 146-amino-acid chain; its full sequence is Putative phosphotransferase enzyme IIA component YadI (146 aa).

A PTS EIIA type-4 domain is found at 1 to 124; it reads MLGWVITCHD…RIVELGAPEV (124 aa). The active-site Tele-phosphohistidine intermediate is His-9.

Its subcellular location is the cytoplasm. Its function is as follows. The phosphoenolpyruvate-dependent sugar phosphotransferase system (sugar PTS), a major carbohydrate active -transport system, catalyzes the phosphorylation of incoming sugar substrates concomitantly with their translocation across the cell membrane. This is Putative phosphotransferase enzyme IIA component YadI (yadI) from Escherichia coli (strain K12).